A 681-amino-acid chain; its full sequence is MTEQSSKSHPSFMSTEYSLPVFSSQYSDIENKDVLKSNSWDPYAANAPIALSEIPSSSKSGKTNGSKAAVESGLASGAFGNRTGNMNRNTSMSGYTFGSSNFVPYNLLSNTPSFTTSHSSSTTFVPPATMGGGLNNLSSPSSSLYLPGSASYQRSNSKNSSASILQMNTTLDDIPILLRRPGLSSYTPGPSTSRRSISSSSNLGGNPGLIANNPSASKNFAFTSGSSSTNNSTTSSSSMANGLQSISKHSAAFPLLSNATSFFGENLTPSLAASTASTGSTDSSGSNIANTLIAPTPTISPPSANTVGNPSPADTPGFNVPSLISDDPSVSSSLSSSVASLSLQNSNILSFCKDQHGCRYLQRLLEKKNQSHIDAVFAETHPYLAVLMVDAFGNYLCQKLFEHASEAQRSTFIQIIAPKLVPISFNMHGTRALQKIIDLVSSPDQISCIVNALRPNVVLLTKDLNGNHVIQKCLNKFSQEDCQFIFDAICEDPLDVSTHRHGCCVVQRCFDHASPAQIEQLVEHIVPHALTLVQDAFGNYVLQYVLELNNPNHTEAIISYFLYKVRALSTQKFSSNVMEKCIFFAPAAIKEKLISELMDEKHLPKLLRDSFANYVIQTALDNASVKQRAELVERIKPLIPSIKNTPCGRRILSKLERRHPSSKEKPIVYSNSERVNTSSSA.

Disordered stretches follow at residues 180–210 and 273–322; these read RPGL…PGLI and ASTA…NVPS. 2 stretches are compositionally biased toward low complexity: residues 187–210 and 273–286; these read TPGP…PGLI and ASTA…SSGS. A PUM-HD domain is found at 319 to 659; that stretch reads NVPSLISDDP…RILSKLERRH (341 aa). 8 Pumilio repeats span residues 342 to 378, 379 to 414, 415 to 451, 452 to 487, 488 to 523, 524 to 559, 560 to 595, and 596 to 633; these read SLQN…AVFA, ETHP…TFIQ, IIAP…CIVN, ALRP…FIFD, AICE…QLVE, HIVP…AIIS, YFLY…KLIS, and ELMD…ELVE. Positions 656 to 666 are enriched in basic and acidic residues; sequence ERRHPSSKEKP. The disordered stretch occupies residues 656 to 681; that stretch reads ERRHPSSKEKPIVYSNSERVNTSSSA. Residues 669–681 are compositionally biased toward polar residues; sequence YSNSERVNTSSSA.

This chain is Pumilio domain-containing protein C6G9.14, found in Schizosaccharomyces pombe (strain 972 / ATCC 24843) (Fission yeast).